The primary structure comprises 266 residues: Cell division cycle-associated protein 3 (266 aa).

The interval 1–84 is disordered; sequence MGSTQSVSGT…TPMKISGPDP (84 aa). A phosphoserine mark is found at Ser-29 and Ser-31. A compositionally biased stretch (polar residues) spans 32–46; that stretch reads AGIQRTPIQVESSPQ. Thr-37 carries the post-translational modification Phosphothreonine. Residues Ser-44 and Ser-67 each carry the phosphoserine modification. Thr-75 carries the phosphothreonine modification. The F-box-like stretch occupies residues 90–119; the sequence is KELSEVLETEASESISSPELALPRETPLFY. Phosphoserine is present on Ser-93. Disordered regions lie at residues 120–225 and 242–266; these read DLDL…LSEN and KAGGGAREPNQDHDKENQHFALLES. Positions 143–156 are enriched in basic and acidic residues; the sequence is LDPKQVFTKEEAKQ. Over residues 157 to 168 the composition is skewed to polar residues; that stretch reads SAETIAASQNSD. Ser-197 is subject to Phosphoserine. Residue Thr-200 is modified to Phosphothreonine. A compositionally biased stretch (polar residues) spans 203–213; the sequence is QDDNSPGTLTL. Ser-207 is subject to Phosphoserine. Thr-210 is subject to Phosphothreonine. The span at 250–259 shows a compositional bias: basic and acidic residues; sequence PNQDHDKENQ. The KEN box motif lies at 256–258; that stretch reads KEN.

In terms of assembly, interacts with SKP1. Part of a SCF (SKP1-cullin-F-box) protein ligase complex. In terms of processing, ubiquitinated and degraded by the APC/C-Cdh1 complex.

The protein localises to the cytoplasm. The protein resides in the cytosol. It participates in protein modification; protein ubiquitination. Its function is as follows. F-box-like protein which is required for entry into mitosis. Acts by participating in E3 ligase complexes that mediate the ubiquitination and degradation of WEE1 kinase at G2/M phase. In Mus musculus (Mouse), this protein is Cell division cycle-associated protein 3 (Cdca3).